The sequence spans 135 residues: Large ribosomal subunit protein mL41A (135 aa).

A mitochondrion-targeting transit peptide spans 1–13; the sequence is MGLISKIARGLVR.

Belongs to the mitochondrion-specific ribosomal protein mL41 family. In terms of assembly, component of the mitochondrial ribosome large subunit (39S) which comprises a 16S rRNA and about 50 distinct proteins.

Its subcellular location is the mitochondrion. Component of the mitochondrial ribosome large subunit. Also involved in apoptosis and cell cycle. This Xenopus laevis (African clawed frog) protein is Large ribosomal subunit protein mL41A (mrpl41-a).